The primary structure comprises 131 residues: Hydrophilin PGA14 (131 aa).

An N-terminal signal peptide occupies residues 1-18 (MKFTTVATVFAISSLAAA). 2 stretches are compositionally biased toward basic and acidic residues: residues 42 to 59 (YGRF…ETGT) and 79 to 96 (KESD…RDSK). The segment at 42-110 (YGRFDKTSRS…NSTTSSGNNG (69 aa)) is disordered. Asn-97 and Asn-101 each carry an N-linked (GlcNAc...) asparagine glycan. Over residues 97–110 (NASSNSTTSSGNNG) the composition is skewed to low complexity. A lipid anchor (GPI-anchor amidated serine) is attached at Ser-105. The propeptide at 106–131 (SGNNGVATGVSLGLAGVLAVGAALVI) is removed in mature form.

Belongs to the PGA14 family. Post-translationally, the GPI-anchor is attached to the protein in the endoplasmic reticulum and serves to target the protein to the cell surface. There, the glucosamine-inositol phospholipid moiety is cleaved off and the GPI-modified mannoprotein is covalently attached via its lipidless GPI glycan remnant to the 1,6-beta-glucan of the outer cell wall layer.

It is found in the secreted. Its subcellular location is the cell wall. The protein resides in the membrane. Functionally, hydrophilin which is essential to overcome the simple stress of the desiccation-rehydration process. This chain is Hydrophilin PGA14 (PGA14), found in Candida albicans (strain SC5314 / ATCC MYA-2876) (Yeast).